The chain runs to 48 residues: ATP synthase protein 8 (48 aa).

A helical membrane pass occupies residues 13–32 (LVYGFALVTILLVLFAQYFL).

Belongs to the ATPase protein 8 family. As to quaternary structure, F-type ATPases have 2 components, CF(1) - the catalytic core - and CF(0) - the membrane proton channel.

It localises to the mitochondrion membrane. Mitochondrial membrane ATP synthase (F(1)F(0) ATP synthase or Complex V) produces ATP from ADP in the presence of a proton gradient across the membrane which is generated by electron transport complexes of the respiratory chain. F-type ATPases consist of two structural domains, F(1) - containing the extramembraneous catalytic core and F(0) - containing the membrane proton channel, linked together by a central stalk and a peripheral stalk. During catalysis, ATP synthesis in the catalytic domain of F(1) is coupled via a rotary mechanism of the central stalk subunits to proton translocation. Part of the complex F(0) domain. Minor subunit located with subunit a in the membrane. The chain is ATP synthase protein 8 (ATP8) from Kluyveromyces lactis (strain ATCC 8585 / CBS 2359 / DSM 70799 / NBRC 1267 / NRRL Y-1140 / WM37) (Yeast).